The primary structure comprises 202 residues: LexA repressor (202 aa).

The segment at residues 28–48 (RAEIAQRLGFRSPNAAEEHLK) is a DNA-binding region (H-T-H motif). Residues serine 119 and lysine 156 each act as for autocatalytic cleavage activity in the active site.

It belongs to the peptidase S24 family. As to quaternary structure, homodimer.

It catalyses the reaction Hydrolysis of Ala-|-Gly bond in repressor LexA.. In terms of biological role, represses a number of genes involved in the response to DNA damage (SOS response), including recA and lexA. Binds to the 16 bp palindromic sequence 5'-CTGTATATATATACAG-3'. In the presence of single-stranded DNA, RecA interacts with LexA causing an autocatalytic cleavage which disrupts the DNA-binding part of LexA, leading to derepression of the SOS regulon and eventually DNA repair. In Escherichia fergusonii (strain ATCC 35469 / DSM 13698 / CCUG 18766 / IAM 14443 / JCM 21226 / LMG 7866 / NBRC 102419 / NCTC 12128 / CDC 0568-73), this protein is LexA repressor.